The sequence spans 422 residues: uncharacterized protein (422 aa).

3 disordered regions span residues 1–21 (MRDNIAKGITAGSNTQQTTYD), 158–218 (TAKS…TEQV), and 246–271 (DFGTAPSSSGSGTQDGTPTPWTPWLT). The segment covering 11 to 21 (AGSNTQQTTYD) has biased composition (polar residues). The segment covering 170–199 (SKSSNGSSSTSTTQRGGSSNENKVKALQVA) has biased composition (low complexity). Composition is skewed to polar residues over residues 205-216 (GSQGNSGDQGTE) and 250-261 (APSSSGSGTQDG). Over residues 262–271 (TPTPWTPWLT) the composition is skewed to low complexity.

Belongs to the adhesin P1 family.

This is an uncharacterized protein from Mycoplasma pneumoniae (strain ATCC 29342 / M129 / Subtype 1) (Mycoplasmoides pneumoniae).